We begin with the raw amino-acid sequence, 261 residues long: UPF0246 protein Rmet_0978 (261 aa).

Belongs to the UPF0246 family.

The sequence is that of UPF0246 protein Rmet_0978 from Cupriavidus metallidurans (strain ATCC 43123 / DSM 2839 / NBRC 102507 / CH34) (Ralstonia metallidurans).